A 155-amino-acid chain; its full sequence is Peptide methionine sulfoxide reductase MsrB (155 aa).

One can recognise a MsrB domain in the interval R15–T137. Zn(2+)-binding residues include C54, C57, C103, and C106. Residue C126 is the Nucleophile of the active site.

The protein belongs to the MsrB Met sulfoxide reductase family. It depends on Zn(2+) as a cofactor.

It catalyses the reaction L-methionyl-[protein] + [thioredoxin]-disulfide + H2O = L-methionyl-(R)-S-oxide-[protein] + [thioredoxin]-dithiol. This Xylella fastidiosa (strain 9a5c) protein is Peptide methionine sulfoxide reductase MsrB.